A 208-amino-acid polypeptide reads, in one-letter code: Large ribosomal subunit protein uL4 (208 aa).

The interval alanine 51–lysine 79 is disordered.

Belongs to the universal ribosomal protein uL4 family. Part of the 50S ribosomal subunit.

Functionally, one of the primary rRNA binding proteins, this protein initially binds near the 5'-end of the 23S rRNA. It is important during the early stages of 50S assembly. It makes multiple contacts with different domains of the 23S rRNA in the assembled 50S subunit and ribosome. In terms of biological role, forms part of the polypeptide exit tunnel. The sequence is that of Large ribosomal subunit protein uL4 from Cytophaga hutchinsonii (strain ATCC 33406 / DSM 1761 / CIP 103989 / NBRC 15051 / NCIMB 9469 / D465).